The chain runs to 176 residues: 3-hydroxyanthranilate 3,4-dioxygenase (176 aa).

R44 contributes to the O2 binding site. Residues H48, E54, and H92 each contribute to the Fe cation site. Substrate is bound at residue E54. Substrate is bound by residues R96 and E106. Residues C121, C124, C158, and C161 each coordinate Fe cation.

It belongs to the 3-HAO family. Homodimer. It depends on Fe(2+) as a cofactor.

It carries out the reaction 3-hydroxyanthranilate + O2 = (2Z,4Z)-2-amino-3-carboxymuconate 6-semialdehyde. It participates in cofactor biosynthesis; NAD(+) biosynthesis; quinolinate from L-kynurenine: step 3/3. In terms of biological role, catalyzes the oxidative ring opening of 3-hydroxyanthranilate to 2-amino-3-carboxymuconate semialdehyde, which spontaneously cyclizes to quinolinate. This is 3-hydroxyanthranilate 3,4-dioxygenase from Xanthomonas euvesicatoria pv. vesicatoria (strain 85-10) (Xanthomonas campestris pv. vesicatoria).